Consider the following 71-residue polypeptide: Small ribosomal subunit protein bS18 (71 aa).

Belongs to the bacterial ribosomal protein bS18 family. In terms of assembly, part of the 30S ribosomal subunit. Forms a tight heterodimer with protein bS6.

Its function is as follows. Binds as a heterodimer with protein bS6 to the central domain of the 16S rRNA, where it helps stabilize the platform of the 30S subunit. This is Small ribosomal subunit protein bS18 from Thermosynechococcus vestitus (strain NIES-2133 / IAM M-273 / BP-1).